The chain runs to 314 residues: Olfactory receptor 52K2 (314 aa).

Residues 1 to 27 (MSASNITLTHPTAFLLVGIPGLEHLHI) lie on the Extracellular side of the membrane. Residue Asn5 is glycosylated (N-linked (GlcNAc...) asparagine). A helical transmembrane segment spans residues 28 to 48 (WISIPFCLAYTLALLGNCTLL). Residues 49 to 56 (LIIQADAA) are Cytoplasmic-facing. Residues 57 to 77 (LHEPMYLFLAMLAAIDLVLSS) traverse the membrane as a helical segment. Over 78 to 101 (SALPKMLAIFWFRDREINFFACLA) the chain is Extracellular. Cys99 and Cys191 are joined by a disulfide. The chain crosses the membrane as a helical span at residues 102-122 (QMFFLHSFSIMESAVLLAMAF). Topologically, residues 123-141 (DRYVAICKPLHYTKVLTGS) are cytoplasmic. A helical transmembrane segment spans residues 142 to 162 (LITKIGMAAVARAVTLMTPLP). Residues 163 to 198 (FLLRCFHYCRGPVIAHCYCEHMAVVRLACGDTSFNN) are Extracellular-facing. The chain crosses the membrane as a helical span at residues 199–219 (IYGIAVAMFIVVLDLLLVILS). The Cytoplasmic portion of the chain corresponds to 220 to 239 (YIFILQAVLLLASQEARYKA). A helical membrane pass occupies residues 240 to 260 (FGTCVSHIGAILAFYTTVVIS). Topologically, residues 261–275 (SVMHRVARHAAPHVH) are extracellular. The helical transmembrane segment at 276–296 (ILLANFYLLFPPMVNPIIYGV) threads the bilayer. Over 297 to 314 (KTKQIRESILGVFPRKDM) the chain is Cytoplasmic.

It belongs to the G-protein coupled receptor 1 family.

Its subcellular location is the cell membrane. Its function is as follows. Odorant receptor. The polypeptide is Olfactory receptor 52K2 (OR52K2) (Homo sapiens (Human)).